A 971-amino-acid polypeptide reads, in one-letter code: Exportin-2 (971 aa).

The Importin N-terminal domain occupies 29–102; that stretch reads AEKFLESVEG…KANIVNLMLT (74 aa).

The protein belongs to the XPO2/CSE1 family. As to quaternary structure, interacts with cftr. As to expression, detected in larval gut, liver, exocrine pancreas and part of the brain and retina at 96 hpf.

It is found in the cytoplasm. The protein localises to the nucleus. Its subcellular location is the apical cell membrane. It localises to the basal cell membrane. The protein resides in the lateral cell membrane. Functionally, export receptor for importin alpha. Mediates importin-alpha re-export from the nucleus to the cytoplasm after import substrates have been released into the nucleoplasm. Negatively regulates fluid secretion and plays a role in fluid homeostasis by down-regulating cftr activity. This is Exportin-2 (cse1l) from Danio rerio (Zebrafish).